The sequence spans 213 residues: Holliday junction branch migration complex subunit RuvA (213 aa).

The interval 1 to 69 (MISYLKGIVA…EEIPLLYGFS (69 aa)) is domain I. Residues 70-148 (SPAERDLFRH…EWRKSAGFFV (79 aa)) are domain II. The flexible linker stretch occupies residues 149-158 (ATEGPAPGIL). The interval 158 to 213 (LEEVQMTLFALGYTAHEVSHALHVVSEDIGLPKDAYVEDWIKQAIAHLSSSEQVSH) is domain III.

It belongs to the RuvA family. As to quaternary structure, homotetramer. Forms an RuvA(8)-RuvB(12)-Holliday junction (HJ) complex. HJ DNA is sandwiched between 2 RuvA tetramers; dsDNA enters through RuvA and exits via RuvB. An RuvB hexamer assembles on each DNA strand where it exits the tetramer. Each RuvB hexamer is contacted by two RuvA subunits (via domain III) on 2 adjacent RuvB subunits; this complex drives branch migration. In the full resolvosome a probable DNA-RuvA(4)-RuvB(12)-RuvC(2) complex forms which resolves the HJ.

It is found in the cytoplasm. Functionally, the RuvA-RuvB-RuvC complex processes Holliday junction (HJ) DNA during genetic recombination and DNA repair, while the RuvA-RuvB complex plays an important role in the rescue of blocked DNA replication forks via replication fork reversal (RFR). RuvA specifically binds to HJ cruciform DNA, conferring on it an open structure. The RuvB hexamer acts as an ATP-dependent pump, pulling dsDNA into and through the RuvAB complex. HJ branch migration allows RuvC to scan DNA until it finds its consensus sequence, where it cleaves and resolves the cruciform DNA. The sequence is that of Holliday junction branch migration complex subunit RuvA from Nostoc sp. (strain PCC 7120 / SAG 25.82 / UTEX 2576).